We begin with the raw amino-acid sequence, 392 residues long: GTPase Obg (392 aa).

Residues 1-159 (MKFVDEAEIR…RNLKLELMLL (159 aa)) form the Obg domain. The interval 121–146 (GFHGLGNTRFKSSTNRAPRQKTNGTP) is disordered. Polar residues predominate over residues 129–145 (RFKSSTNRAPRQKTNGT). Positions 160–333 (ADVGLLGMPN…LCNDVMDFIE (174 aa)) constitute an OBG-type G domain. GTP contacts are provided by residues 166 to 173 (GMPNAGKS), 191 to 195 (FTTLV), 213 to 216 (DIPG), 283 to 286 (NKVD), and 314 to 316 (SAF). Mg(2+) contacts are provided by Ser173 and Thr193.

This sequence belongs to the TRAFAC class OBG-HflX-like GTPase superfamily. OBG GTPase family. Monomer. The cofactor is Mg(2+).

Its subcellular location is the cytoplasm. Functionally, an essential GTPase which binds GTP, GDP and possibly (p)ppGpp with moderate affinity, with high nucleotide exchange rates and a fairly low GTP hydrolysis rate. Plays a role in control of the cell cycle, stress response, ribosome biogenesis and in those bacteria that undergo differentiation, in morphogenesis control. The protein is GTPase Obg of Alteromonas mediterranea (strain DSM 17117 / CIP 110805 / LMG 28347 / Deep ecotype).